The sequence spans 262 residues: Tetrahydromethanopterin S-methyltransferase subunit C (262 aa).

6 helical membrane passes run 35-57 (FVPS…AGAN), 70-92 (GVPS…GVLI), 97-119 (GLPV…FIVG), 140-162 (LSLM…FSAD), 172-194 (GVIA…ACIG), and 214-236 (WLIF…FWLY).

The protein belongs to the MtrC family. In terms of assembly, the complex is composed of 8 subunits; MtrA, MtrB, MtrC, MtrD, MtrE, MtrF, MtrG and MtrH.

It localises to the cell membrane. It carries out the reaction 5-methyl-5,6,7,8-tetrahydromethanopterin + coenzyme M + 2 Na(+)(in) = 5,6,7,8-tetrahydromethanopterin + methyl-coenzyme M + 2 Na(+)(out). Its pathway is one-carbon metabolism; methanogenesis from CO(2); methyl-coenzyme M from 5,10-methylene-5,6,7,8-tetrahydromethanopterin: step 2/2. Functionally, part of a complex that catalyzes the formation of methyl-coenzyme M and tetrahydromethanopterin from coenzyme M and methyl-tetrahydromethanopterin. This is an energy-conserving, sodium-ion translocating step. The protein is Tetrahydromethanopterin S-methyltransferase subunit C of Methanococcus maripaludis (strain DSM 14266 / JCM 13030 / NBRC 101832 / S2 / LL).